A 349-amino-acid polypeptide reads, in one-letter code: Isopentenyl-diphosphate delta-isomerase (349 aa).

6-7 is a binding site for substrate; sequence RK. FMN is bound by residues 62–64, Ser93, and Asn122; that span reads AMT. Gln152 lines the substrate pocket. Glu153 is a Mg(2+) binding site. FMN is bound by residues Lys184, Thr214, 258 to 259, and 280 to 281; these read GG and AG.

This sequence belongs to the IPP isomerase type 2 family. In terms of assembly, homooctamer. Dimer of tetramers. Requires FMN as cofactor. NADPH is required as a cofactor. It depends on Mg(2+) as a cofactor.

The protein resides in the cytoplasm. The enzyme catalyses isopentenyl diphosphate = dimethylallyl diphosphate. Its function is as follows. Involved in the biosynthesis of isoprenoids. Catalyzes the 1,3-allylic rearrangement of the homoallylic substrate isopentenyl (IPP) to its allylic isomer, dimethylallyl diphosphate (DMAPP). The sequence is that of Isopentenyl-diphosphate delta-isomerase from Bacillus cereus (strain AH187).